Here is a 407-residue protein sequence, read N- to C-terminus: Dephospho-CoA kinase (407 aa).

The region spanning 3–204 is the DPCK domain; the sequence is RIGLTGGIGA…QPFAHNLAQR (202 aa). Residue 11–16 coordinates ATP; that stretch reads GAGKSL. The tract at residues 196-407 is UPF0157; the sequence is PFAHNLAQRQ…EWADAVHWRP (212 aa).

The protein in the N-terminal section; belongs to the CoaE family. It in the C-terminal section; belongs to the UPF0157 (GrpB) family.

It localises to the cytoplasm. The catalysed reaction is 3'-dephospho-CoA + ATP = ADP + CoA + H(+). Its pathway is cofactor biosynthesis; coenzyme A biosynthesis; CoA from (R)-pantothenate: step 5/5. Functionally, catalyzes the phosphorylation of the 3'-hydroxyl group of dephosphocoenzyme A to form coenzyme A. The sequence is that of Dephospho-CoA kinase from Mycobacterium bovis (strain ATCC BAA-935 / AF2122/97).